Here is a 496-residue protein sequence, read N- to C-terminus: ADP-dependent glucokinase (496 aa).

An N-terminal signal peptide occupies residues 1–22 (MALWRGSACAGFLALAVGCVFL). Positions 52–496 (SPESRLAAAW…GLFYSEARPD (445 aa)) constitute an ADPK domain. Mg(2+) contacts are provided by Glu297, Glu328, and Asp481. Asp481 acts as the Proton acceptor in catalysis.

The protein belongs to the ADP-dependent glucokinase family. Monomer. It depends on Mg(2+) as a cofactor.

It localises to the secreted. It catalyses the reaction D-glucose + ADP = D-glucose 6-phosphate + AMP + H(+). It participates in carbohydrate degradation; glycolysis. Catalyzes the phosphorylation of D-glucose to D-glucose 6-phosphate using ADP as the phosphate donor. GDP and CDP can replace ADP, but with reduced efficiency. The protein is ADP-dependent glucokinase (Adpgk) of Mus musculus (Mouse).